The following is a 550-amino-acid chain: Chaperonin GroEL (550 aa).

ATP is bound by residues 30 to 33, K51, 87 to 91, G415, and D497; these read TLGP and DGTTT.

Belongs to the chaperonin (HSP60) family. In terms of assembly, forms a cylinder of 14 subunits composed of two heptameric rings stacked back-to-back. Interacts with the co-chaperonin GroES.

It is found in the cytoplasm. The catalysed reaction is ATP + H2O + a folded polypeptide = ADP + phosphate + an unfolded polypeptide.. Functionally, together with its co-chaperonin GroES, plays an essential role in assisting protein folding. The GroEL-GroES system forms a nano-cage that allows encapsulation of the non-native substrate proteins and provides a physical environment optimized to promote and accelerate protein folding. The polypeptide is Chaperonin GroEL (Yersinia enterocolitica).